Consider the following 109-residue polypeptide: Phycoerythrin alpha-2 subunit (109 aa).

(2R,3E)-phycoerythrobilin is bound by residues Asp52, Ser53, Glu63, Arg64, Cys67, Thr72, Lys74, Ala75, and Lys84.

The protein belongs to the phycoerythrin family. Heterotetramer of 2 different alpha chains and 2 identical beta chains which form 2 alpha-beta heterodimers within the heterotetramer. The two alpha-beta heterodimers are rotated to an open configuration in contrast to the closed configuration found in other cryptophyte species due to the insertion of a single amino acid, Asp-65, in a conserved region of the alpha chain. In the open form, the central chromophores are not in physical contact but are separated by a water-filled channel. Post-translationally, contains three phycoerythrobilin chromophores with binding mediated by both the alpha and beta subunits.

It is found in the plastid. Its subcellular location is the chloroplast thylakoid membrane. Light-harvesting photosynthetic tetrapyrrole chromophore-protein from the phycobiliprotein complex. The chain is Phycoerythrin alpha-2 subunit from Hemiselmis andersenii (Cryptophyte alga).